The following is a 173-amino-acid chain: MNDLRYPIGQFTYKRPITEEMIDTWIQEIEDLPHELTKAIKDLDQKQLDTPYRVGGWTVRQVVHHVVDSHMNSYIRFKLALTEKNPTIKPYKEEKWAELPDSKLPVDVSLVMLDSLHKRWVNLLYSLEIEDLEKTFNHPETGETKLAVAIGLYAWHGRHHTAHITSLRKRLNW.

H65, H156, and H160 together coordinate Zn(2+).

Belongs to the metal hydrolase YfiT family. Homodimer. Requires Zn(2+) as cofactor.

The protein resides in the cytoplasm. In terms of biological role, possible metal-dependent hydrolase. The polypeptide is Putative metal-dependent hydrolase BCG9842_B2589 (Bacillus cereus (strain G9842)).